We begin with the raw amino-acid sequence, 430 residues long: 5-methylthioadenosine/S-adenosylhomocysteine deaminase (430 aa).

Zn(2+) is bound by residues His63 and His65. Substrate contacts are provided by Glu92, Arg144, and His182. His209 is a Zn(2+) binding site. Substrate contacts are provided by Glu212 and Asp297. Asp297 provides a ligand contact to Zn(2+).

Belongs to the metallo-dependent hydrolases superfamily. MTA/SAH deaminase family. The cofactor is Zn(2+).

It catalyses the reaction S-adenosyl-L-homocysteine + H2O + H(+) = S-inosyl-L-homocysteine + NH4(+). The enzyme catalyses S-methyl-5'-thioadenosine + H2O + H(+) = S-methyl-5'-thioinosine + NH4(+). In terms of biological role, catalyzes the deamination of 5-methylthioadenosine and S-adenosyl-L-homocysteine into 5-methylthioinosine and S-inosyl-L-homocysteine, respectively. Is also able to deaminate adenosine. This chain is 5-methylthioadenosine/S-adenosylhomocysteine deaminase, found in Desulforudis audaxviator (strain MP104C).